Here is a 236-residue protein sequence, read N- to C-terminus: Small ribosomal subunit protein uS3 (236 aa).

A KH type-2 domain is found at 39–107 (IREILHKELK…DVVINIVEIR (69 aa)). The tract at residues 213–236 (MAQDKRMNEGGGESSQPRSRRDAA) is disordered.

Belongs to the universal ribosomal protein uS3 family. As to quaternary structure, part of the 30S ribosomal subunit. Forms a tight complex with proteins S10 and S14.

Binds the lower part of the 30S subunit head. Binds mRNA in the 70S ribosome, positioning it for translation. The chain is Small ribosomal subunit protein uS3 from Bradyrhizobium sp. (strain BTAi1 / ATCC BAA-1182).